Consider the following 543-residue polypeptide: CTP synthase (543 aa).

The interval Met-1–Leu-265 is amidoligase domain. Ser-13 contacts CTP. Ser-13 is a UTP binding site. ATP is bound by residues Ser-14–Ile-19 and Asp-71. Mg(2+) contacts are provided by Asp-71 and Glu-139. CTP contacts are provided by residues Asp-146–Glu-148, Lys-186–Gln-191, and Lys-222. Residues Lys-186–Gln-191 and Lys-222 contribute to the UTP site. Residues Thr-290–Arg-541 form the Glutamine amidotransferase type-1 domain. Gly-351 is an L-glutamine binding site. Residue Cys-378 is the Nucleophile; for glutamine hydrolysis of the active site. Residues Leu-379–Gln-382, Glu-402, and Arg-469 contribute to the L-glutamine site. Residues His-514 and Glu-516 contribute to the active site.

It belongs to the CTP synthase family. In terms of assembly, homotetramer.

It catalyses the reaction UTP + L-glutamine + ATP + H2O = CTP + L-glutamate + ADP + phosphate + 2 H(+). The catalysed reaction is L-glutamine + H2O = L-glutamate + NH4(+). The enzyme catalyses UTP + NH4(+) + ATP = CTP + ADP + phosphate + 2 H(+). It participates in pyrimidine metabolism; CTP biosynthesis via de novo pathway; CTP from UDP: step 2/2. Allosterically activated by GTP, when glutamine is the substrate; GTP has no effect on the reaction when ammonia is the substrate. The allosteric effector GTP functions by stabilizing the protein conformation that binds the tetrahedral intermediate(s) formed during glutamine hydrolysis. Inhibited by the product CTP, via allosteric rather than competitive inhibition. Functionally, catalyzes the ATP-dependent amination of UTP to CTP with either L-glutamine or ammonia as the source of nitrogen. Regulates intracellular CTP levels through interactions with the four ribonucleotide triphosphates. The sequence is that of CTP synthase from Azotobacter vinelandii (strain DJ / ATCC BAA-1303).